Here is a 79-residue protein sequence, read N- to C-terminus: MGGISIWQLLIIALIVILLFGTKKLRSLGGDLGGAVKGFKNAMTSETSEEEKKALEDSQTAQTSQQAEKKPESKDKEQA.

A helical membrane pass occupies residues Met1–Gly21. The segment at Ala42–Ala79 is disordered. A compositionally biased stretch (polar residues) spans Asp57–Gln66. Residues Ala67 to Ala79 are compositionally biased toward basic and acidic residues.

This sequence belongs to the TatA/E family. The Tat system comprises two distinct complexes: a TatABC complex, containing multiple copies of TatA, TatB and TatC subunits, and a separate TatA complex, containing only TatA subunits. Substrates initially bind to the TatABC complex, which probably triggers association of the separate TatA complex to form the active translocon.

The protein resides in the cell inner membrane. In terms of biological role, part of the twin-arginine translocation (Tat) system that transports large folded proteins containing a characteristic twin-arginine motif in their signal peptide across membranes. TatA could form the protein-conducting channel of the Tat system. The protein is Sec-independent protein translocase protein TatA of Shewanella denitrificans (strain OS217 / ATCC BAA-1090 / DSM 15013).